Here is an 85-residue protein sequence, read N- to C-terminus: Large ribosomal subunit protein bL27 (85 aa).

The protein belongs to the bacterial ribosomal protein bL27 family.

In Sodalis glossinidius (strain morsitans), this protein is Large ribosomal subunit protein bL27.